The sequence spans 596 residues: Arginine--tRNA ligase (596 aa).

Residues 127–137 (ANPTGPVHVGR) carry the 'HIGH' region motif.

This sequence belongs to the class-I aminoacyl-tRNA synthetase family.

The protein resides in the cytoplasm. It catalyses the reaction tRNA(Arg) + L-arginine + ATP = L-arginyl-tRNA(Arg) + AMP + diphosphate. The polypeptide is Arginine--tRNA ligase (Haloquadratum walsbyi (strain DSM 16790 / HBSQ001)).